Reading from the N-terminus, the 65-residue chain is Diapause-specific peptide (65 aa).

The first 24 residues, 1–24, serve as a signal peptide directing secretion; it reads MGAALKMTIFLLIVACAMIATTEA. 3 cysteine pairs are disulfide-bonded: cysteine 31–cysteine 45, cysteine 35–cysteine 57, and cysteine 46–cysteine 64.

As to expression, highly expressed in the fat body.

It is found in the secreted. Has antifungal activity against T.rubrum. Blocks voltage-dependent N-type calcium channels (Cav2.2 / CACNA1B). This chain is Diapause-specific peptide, found in Gastrophysa atrocyanea (Leaf beetle).